The primary structure comprises 853 residues: WEB family protein At5g16730, chloroplastic (853 aa).

2 stretches are compositionally biased toward low complexity: residues 1–27 (MASK…PATP) and 36–49 (KSET…STTT). A chloroplast-targeting transit peptide spans 1–84 (MASKTKTSLS…PTPPEKSQAR (84 aa)). Disordered stretches follow at residues 1–106 (MASK…IKED), 386–465 (KEDL…SKKA), 666–765 (LAKK…SVEV), and 778–820 (KEAF…ALTA). Residues 92 to 101 (ESPQTTTRLS) are compositionally biased toward polar residues. Residues 94-670 (PQTTTRLSQI…LEEAILAKKQ (577 aa)) are a coiled coil. Basic and acidic residues-rich tracts occupy residues 402-465 (EVSK…SKKA), 698-718 (NGHR…HEPP), and 732-753 (MEEK…KKDE). Residues 754 to 763 (SQDDDKDDSV) are compositionally biased toward acidic residues. Residues 778-788 (KEAFPDKKSEL) are compositionally biased toward basic and acidic residues. At Ser-790 the chain carries Phosphoserine. Residues 797 to 807 (SSKIDESDKTS) are compositionally biased toward basic and acidic residues.

This sequence belongs to the WEB family.

Its subcellular location is the plastid. It is found in the chloroplast. In Arabidopsis thaliana (Mouse-ear cress), this protein is WEB family protein At5g16730, chloroplastic.